Consider the following 143-residue polypeptide: NADH-quinone oxidoreductase subunit A (143 aa).

The next 3 membrane-spanning stretches (helical) occupy residues 8–28, 63–83, and 93–113; these read FGNVFAFLALGVVFVAGGYLT, FYVVALIFIIFDVEVVFLYPW, and FALIEALVFAGILVLGLAYAW.

This sequence belongs to the complex I subunit 3 family. NDH-1 is composed of 14 different subunits. Subunits NuoA, H, J, K, L, M, N constitute the membrane sector of the complex.

Its subcellular location is the cell inner membrane. The catalysed reaction is a quinone + NADH + 5 H(+)(in) = a quinol + NAD(+) + 4 H(+)(out). NDH-1 shuttles electrons from NADH, via FMN and iron-sulfur (Fe-S) centers, to quinones in the respiratory chain. The immediate electron acceptor for the enzyme in this species is believed to be a menaquinone. Couples the redox reaction to proton translocation (for every two electrons transferred, four hydrogen ions are translocated across the cytoplasmic membrane), and thus conserves the redox energy in a proton gradient. The chain is NADH-quinone oxidoreductase subunit A from Pelodictyon phaeoclathratiforme (strain DSM 5477 / BU-1).